Here is an 821-residue protein sequence, read N- to C-terminus: Protein SCAR1 (821 aa).

Disordered regions lie at residues 168 to 189 (KRAS…QRGR), 205 to 289 (TCTS…RGSS), and 577 to 625 (TSLP…RESK). Residues 206 to 225 (CTSLSFSGRTSTSKTASTIE) are compositionally biased toward polar residues. The span at 226–250 (IESKSDLQEHRSFSFDSRSGGEKPK) shows a compositional bias: basic and acidic residues. Residues 252–265 (VSSSSRFTPGSRTI) are compositionally biased toward polar residues. Over residues 592-612 (SSSYISDNSDNDNRSVSMSEQ) the composition is skewed to low complexity. One can recognise a WH2 domain in the interval 756 to 774 (EAGDFLHQIRTKQFNLRRV). A disordered region spans residues 802 to 821 (QAVASDDGEGESDTWSDSDT). Positions 807 to 821 (DDGEGESDTWSDSDT) are enriched in acidic residues.

Belongs to the SCAR/WAVE family. As to quaternary structure, binds BRK1 and actin. Interacts with SPK1, ABI1 and ABI2. In terms of tissue distribution, expressed in expanding cotyledons, expanding leaves and expanding siliques containing developing embryos. Detected in unopened flower buds and in the expanding tip region of roots. Reduced expression in mature leaves and mature cotyledons.

Its subcellular location is the cytoplasm. It is found in the cytoskeleton. Its function is as follows. Involved in regulation of actin and microtubule organization. Part of a WAVE complex that activates the Arp2/3 complex. Regulates trichome branch positioning and expansion. The protein is Protein SCAR1 (SCAR1) of Arabidopsis thaliana (Mouse-ear cress).